A 342-amino-acid polypeptide reads, in one-letter code: MGSISPKTRFPIVLGAGLIGSPGLFEGATVTTVKDVEALLDTFQAHGHTDVDVARIYGSGSAETLLAAADWKGRGLVVRDKLYPTKRRPMAHLGTAYTLEPADVRRGLLDCLKALNTPKLDLFILYAPDRQVPVEETLREVNKLYEEGLFSRLGISNYMAWEVVQIMELCEKNAWVKPSLYQSLYNVLHRAIEPELVPCLRAYNLPLHVGQPLCGGFLTSRYRRDMPESEHKPGSRFDPQTFHGRHHRHRYWNDAYFDVLDTIRETGRKYNLTEVQCALRWLSHHSLLRPECGDAILVCGSDPAQLEEDLLALEEPPLPEEVVQVLDEGYAKVKAVVGPYYH.

An N-terminal signal peptide occupies residues 1–27; it reads MGSISPKTRFPIVLGAGLIGSPGLFEG. D52 is a binding site for NADP(+). The active-site Proton donor is Y57. 2 residues coordinate NADP(+): Q182 and R236. The N-linked (GlcNAc...) asparagine glycan is linked to N271.

Belongs to the aldo/keto reductase family. Aldo/keto reductase 2 subfamily.

Its pathway is secondary metabolite biosynthesis. Its function is as follows. Aldo-keto reductase; part of the gene cluster that mediates the biosynthesis of azaphilone pigments (MonAzPs), a complex mixture of compounds with a common azaphilone skeleton very widely used as food colorants. Within the pathway, pigE is involved in the dehydration of the C-11 alcohol followed by the reduction of the C6(7) double bond which increases the electrophilicity of the C-5 ketone of the resulting acyl benzopyran and allows the intramolecular Knoevenagel aldol condensation with the C-20 enol of the side chain to yield the characteristic linear tricyclic carbon skeletons of the yellow pigments. The first step of the pathway is performed by the nrPKS pigA that forms the hexaketide precursor from successive condensations of five malonyl-CoA units, with a simple acetyl-CoA starter unit. The role of esterase pigG is not clear, but it may play at most a supplementary role in the formation of the benzaldehyde produced by the pigA nrPKS. This very reactive benzaldehyde is intercepted by the pigC ketoreductase that to provide the first stable enzyme-free MonAzPs intermediate, 6-(4-hydroxy-2-oxopentyl)-3-methyl-2,4-dioxocyclohexane carbaldehyde, also known as M7PKS-1. The FAD-dependent monooxygenase pigN hydroxylates M7PKS-1 at C-4, which triggers the formation of the pyran ring. PigJ, pigK and pigD are involved in the acetylation of the pyran ring. PigJ and pigK form the two subunits of a dedicated fungal FAS that produces the side chain fatty acyl moiety of MonAzPs and pigD transfers the fatty acyl chain to the C-4 alcohol. PigM and pigO are involved in the elimination of the omega-1 alcohol. PigM acts as an O-acetyltransferase that synthesizes the putative O-11 acetyl intermediate whereas pigO eliminates acetic acid to yield an intermediate with a C10(11) double bond. The dehydration of the C-11 alcohol followed by the reduction of the C6(7) double bond by the NAD(P)H-dependent oxidoreductase pigE increases the electrophilicity of the C-5 ketone of the resulting acyl benzopyran. This in turn sets up the C-5 ketone for an intramolecular Knoevenagel aldol condensation with the C-20 enol of the side chain. This condensation affords the characteristic linear tricyclic carbon skeletons of the yellow pigments that serve as the common precursors for the classical yellow pigments monascin and ankaflavin, orange pigments rubopunctatin and monascorubrin, and red pigments ribropunctamine and monascorubramine. The FAD-dependent oxidoreductase pigF is especially invoved in the biosynthesis of orange and red pigments via desaturation of C6(7). In Monascus ruber (Mold), this protein is Aldo-keto reductase pigE.